The following is a 448-amino-acid chain: Argininosuccinate synthase (448 aa).

Residues 17-25 (AFSGGLDTS) and Ala43 each bind ATP. L-citrulline is bound at residue Tyr99. ATP-binding residues include Gly129 and Thr131. Residues Thr131, Asn135, and Asp136 each coordinate L-aspartate. Asn135 is a binding site for L-citrulline. Asp136 is an ATP binding site. 2 residues coordinate L-citrulline: Arg139 and Ser192. An ATP-binding site is contributed by Asp194. Thr201, Glu203, and Glu280 together coordinate L-citrulline.

Belongs to the argininosuccinate synthase family. Type 2 subfamily. Homotetramer.

The protein resides in the cytoplasm. It carries out the reaction L-citrulline + L-aspartate + ATP = 2-(N(omega)-L-arginino)succinate + AMP + diphosphate + H(+). Its pathway is amino-acid biosynthesis; L-arginine biosynthesis; L-arginine from L-ornithine and carbamoyl phosphate: step 2/3. The protein is Argininosuccinate synthase of Acidovorax ebreus (strain TPSY) (Diaphorobacter sp. (strain TPSY)).